A 33-amino-acid chain; its full sequence is Photosystem II reaction center protein Psb30 (33 aa).

The helical transmembrane segment at 5–25 (ILAQLTALAFIVVSGPLVIAL) threads the bilayer.

It belongs to the Psb30/Ycf12 family. PSII is composed of 1 copy each of membrane proteins PsbA, PsbB, PsbC, PsbD, PsbE, PsbF, PsbH, PsbI, PsbJ, PsbK, PsbL, PsbM, PsbT, PsbX, PsbY, PsbZ, Psb30/Ycf12, peripheral proteins of the oxygen-evolving complex and a large number of cofactors. It forms dimeric complexes.

The protein localises to the plastid. It is found in the chloroplast thylakoid membrane. Its function is as follows. A core subunit of photosystem II (PSII), probably helps stabilize the reaction center. This chain is Photosystem II reaction center protein Psb30, found in Chaetosphaeridium globosum (Charophycean green alga).